A 61-amino-acid chain; its full sequence is Probable tautomerase BA_5626/GBAA_5626/BAS5226 (61 aa).

Pro-2 acts as the Proton acceptor; via imino nitrogen in catalysis.

It belongs to the 4-oxalocrotonate tautomerase family.

This Bacillus anthracis protein is Probable tautomerase BA_5626/GBAA_5626/BAS5226.